The following is a 425-amino-acid chain: [Pyruvate dehydrogenase (acetyl-transferring)] kinase, mitochondrial (425 aa).

Residue His178 is modified to Phosphohistidine; by autocatalysis. Residues Asn180–Cys418 form the Histidine kinase domain. Residues Glu296–Arg303, Asp336, Thr355–Thr356, and Gly379–Leu384 each bind ATP.

This sequence belongs to the PDK/BCKDK protein kinase family.

The protein resides in the mitochondrion matrix. It carries out the reaction L-seryl-[pyruvate dehydrogenase E1 alpha subunit] + ATP = O-phospho-L-seryl-[pyruvate dehydrogenase E1 alpha subunit] + ADP + H(+). Functionally, inhibits the mitochondrial pyruvate dehydrogenase complex by phosphorylation of the E1 alpha subunit, thus contributing to the regulation of glucose metabolism. The sequence is that of [Pyruvate dehydrogenase (acetyl-transferring)] kinase, mitochondrial (pkp1) from Schizosaccharomyces pombe (strain 972 / ATCC 24843) (Fission yeast).